Reading from the N-terminus, the 285-residue chain is MATTRLNPSCHFPASTRLSCESYLGLRTTGRISYARTLTAPRGYLAVKANGGQASVVTAAAITEKQQKKYPGESKGFVEEMRFVAMRLHTKDQAREGEKESRSPEEGPVAKWEPTVEGYLHFLVDSKLVYDTLEGIIDGSNFPTYAGFKNTGLERAESLRKDLEWFKEQGYEIPEPMAPGKTYSEYLKDLAENDPQAFICHFYNIYFAHSAGGQMIGTKVSKKILDNKELEFYKWDGQLSQLLQNVRQKLNKVAEWWTREEKSHCLEETEKSFKFSGEILRLILS.

The transit peptide at 1–58 directs the protein to the chloroplast; the sequence is MATTRLNPSCHFPASTRLSCESYLGLRTTGRISYARTLTAPRGYLAVKANGGQASVVT. His-89 serves as a coordination point for heme b. The span at 89-105 shows a compositional bias: basic and acidic residues; the sequence is HTKDQAREGEKESRSPE. The segment at 89–109 is disordered; it reads HTKDQAREGEKESRSPEEGPV.

It belongs to the heme oxygenase family. Widely expressed at low levels.

Its subcellular location is the plastid. The protein localises to the chloroplast. The catalysed reaction is heme b + 3 reduced [NADPH--hemoprotein reductase] + 3 O2 = biliverdin IXalpha + CO + Fe(2+) + 3 oxidized [NADPH--hemoprotein reductase] + 3 H2O + H(+). Its function is as follows. Catalyzes the opening of the heme ring to form the open-chain tetrapyrrole biliverdin IX with the release of iron and carbon monoxide (CO). Produces specifically the biliverdin IX-alpha isomer. Plays a minor role in phytochrome assembly and photomorphogenesis. This chain is Heme oxygenase 3, chloroplastic (HO3), found in Arabidopsis thaliana (Mouse-ear cress).